A 672-amino-acid chain; its full sequence is MMPPNEQESSFPKTPSANRHETSPVQENRFSSPSHVNPCLDDDNDHDGPSHQSRQSSVLRQSLRPIILKFEELTYSIKSQTGKGSYWFGSQEPKPNRLVLKCVSGIVKPGELLAMLGPSGSGKTTLVTALAGRLQGKLSGTVSYNGEPFTSSVKRKTGFVTQDDVLYPHLTVMETLTYTALLRLPKELTRKEKLEQVEMVVSDLGLTRCCNSVIGGGLIRGISGGERKRVSIGQEMLVNPSLLLLDEPTSGLDSTTAARIVATLRSLARGGRTVVTTIHQPSSRLYRMFDKVLVLSEGCPIYSGDSGRVMEYFGSIGYQPGSSFVNPADFVLDLANGITSDTKQYDQIETNGRLDRLEEQNSVKQSLISSYKKNLYPPLKEEVSRTFPQDQTNARLRKKAITNRWPTSWWMQFSVLLKRGLKERSHESFSGLRIFMVMSVSLLSGLLWWHSRVAHLQDQVGLLFFFSIFWGFFPLFNAIFTFPQERPMLIKERSSGIYRLSSYYIARTVGDLPMELILPTIFVTITYWMGGLKPSLTTFIMTLMIVLYNVLVAQGVGLALGAILMDAKKAATLSSVLMLVFLLAGGYYIQHIPGFIAWLKYVSFSHYCYKLLVGVQYTWDEVYECGSGLHCSVMDYEGIKNLRIGNMMWDVLALAVMLLLYRVLAYLALRNL.

Over residues Met1–His35 the composition is skewed to polar residues. The disordered stretch occupies residues Met1 to Leu59. Positions Ser50–Leu59 are enriched in low complexity. The ABC transporter domain maps to Leu68–Ser322. Gly117 to Thr124 serves as a coordination point for ATP. The region spanning Met411–Tyr617 is the ABC transmembrane type-2 domain. Helical transmembrane passes span Phe429–Trp449, Val460–Phe480, Leu512–Leu532, Leu543–Ile563, Val576–Ile596, and Trp649–Leu669.

It belongs to the ABC transporter superfamily. ABCG family. Eye pigment precursor importer (TC 3.A.1.204) subfamily.

The protein localises to the membrane. The polypeptide is ABC transporter G family member 21 (ABCG21) (Arabidopsis thaliana (Mouse-ear cress)).